A 398-amino-acid polypeptide reads, in one-letter code: Ornithine aminotransferase (398 aa).

The residue at position 256 (Lys-256) is an N6-(pyridoxal phosphate)lysine.

This sequence belongs to the class-III pyridoxal-phosphate-dependent aminotransferase family. OAT subfamily. It depends on pyridoxal 5'-phosphate as a cofactor.

It localises to the cytoplasm. The catalysed reaction is a 2-oxocarboxylate + L-ornithine = L-glutamate 5-semialdehyde + an L-alpha-amino acid. Its pathway is amino-acid biosynthesis; L-proline biosynthesis; L-glutamate 5-semialdehyde from L-ornithine: step 1/1. Functionally, catalyzes the interconversion of ornithine to glutamate semialdehyde. This chain is Ornithine aminotransferase, found in Oceanobacillus iheyensis (strain DSM 14371 / CIP 107618 / JCM 11309 / KCTC 3954 / HTE831).